A 126-amino-acid polypeptide reads, in one-letter code: Histone H2B type 1-K (126 aa).

The span at 1–12 (MPEPAKSAPAPK) shows a compositional bias: low complexity. A disordered region spans residues 1 to 36 (MPEPAKSAPAPKKGSKKAVTKAQKKDGKKRKRSRKE). An N-acetylproline modification is found at proline 2. Glutamate 3 bears the ADP-ribosyl glutamic acid mark. Lysine 6 is modified (N6-(2-hydroxyisobutyryl)lysine; alternate). At lysine 6 the chain carries N6-(beta-hydroxybutyryl)lysine; alternate. The residue at position 6 (lysine 6) is an N6-acetyllysine; alternate. Residue lysine 6 is modified to N6-butyryllysine; alternate. N6-crotonyllysine; alternate is present on lysine 6. Lysine 6 is modified (N6-lactoyllysine; alternate). Lysine 6 participates in a covalent cross-link: Glycyl lysine isopeptide (Lys-Gly) (interchain with G-Cter in SUMO2); alternate. Serine 7 bears the ADP-ribosylserine mark. Position 12 is an N6-(beta-hydroxybutyryl)lysine; alternate (lysine 12). An N6-acetyllysine; alternate mark is found at lysine 12 and lysine 13. N6-crotonyllysine; alternate occurs at positions 12 and 13. Lysine 12 carries the post-translational modification N6-lactoyllysine; alternate. The residue at position 13 (lysine 13) is an N6-(2-hydroxyisobutyryl)lysine; alternate. The residue at position 15 (serine 15) is a Phosphoserine; by STK4/MST1. Residues lysine 16, lysine 17, lysine 21, and lysine 24 each carry the N6-acetyllysine; alternate modification. 4 positions are modified to N6-crotonyllysine; alternate: lysine 16, lysine 17, lysine 21, and lysine 24. N6-lactoyllysine; alternate is present on residues lysine 16, lysine 17, lysine 21, and lysine 24. Lysine 17 bears the N6-glutaryllysine; alternate mark. N6-(2-hydroxyisobutyryl)lysine; alternate is present on residues lysine 21 and lysine 24. Residue lysine 21 is modified to N6-(beta-hydroxybutyryl)lysine; alternate. N6-butyryllysine; alternate is present on lysine 21. Lysine 21 participates in a covalent cross-link: Glycyl lysine isopeptide (Lys-Gly) (interchain with G-Cter in SUMO2); alternate. Lysine 25 carries the post-translational modification N6-(2-hydroxyisobutyryl)lysine. At lysine 35 the chain carries N6-(2-hydroxyisobutyryl)lysine; alternate. Lysine 35 is subject to N6-(beta-hydroxybutyryl)lysine; alternate. Residue lysine 35 is modified to N6-crotonyllysine; alternate. N6-glutaryllysine; alternate is present on lysine 35. Lysine 35 is modified (N6-succinyllysine; alternate). Lysine 35 is covalently cross-linked (Glycyl lysine isopeptide (Lys-Gly) (interchain with G-Cter in ubiquitin); alternate). The residue at position 36 (glutamate 36) is a PolyADP-ribosyl glutamic acid. Phosphoserine; by AMPK is present on serine 37. N6-(2-hydroxyisobutyryl)lysine; alternate is present on residues lysine 44, lysine 47, and lysine 58. At lysine 44 the chain carries N6-lactoyllysine; alternate. Residues lysine 44 and lysine 47 each carry the N6-glutaryllysine; alternate modification. An N6-methyllysine; alternate modification is found at lysine 47. Lysine 58 carries the post-translational modification N6,N6-dimethyllysine; alternate. Arginine 80 carries the dimethylated arginine modification. Lysine 86 is modified (N6-(2-hydroxyisobutyryl)lysine; alternate). Lysine 86 carries the post-translational modification N6-acetyllysine; alternate. At lysine 86 the chain carries N6-lactoyllysine; alternate. Lysine 86 carries the post-translational modification N6,N6,N6-trimethyllysine; alternate. An omega-N-methylarginine mark is found at arginine 87 and arginine 93. Lysine 109 is subject to N6-(2-hydroxyisobutyryl)lysine; alternate. An N6-(beta-hydroxybutyryl)lysine; alternate modification is found at lysine 109. The residue at position 109 (lysine 109) is an N6-lactoyllysine; alternate. An N6-glutaryllysine; alternate modification is found at lysine 109. Lysine 109 is modified (N6-methyllysine; alternate). Serine 113 is a glycosylation site (O-linked (GlcNAc) serine). The residue at position 116 (threonine 116) is a Phosphothreonine. Residues lysine 117 and lysine 121 each carry the N6-(2-hydroxyisobutyryl)lysine; alternate modification. Lysine 117 bears the N6-(beta-hydroxybutyryl)lysine; alternate mark. Lysine 117 and lysine 121 each carry N6-lactoyllysine; alternate. Lysine 117 and lysine 121 each carry N6-glutaryllysine; alternate. 2 positions are modified to N6-succinyllysine; alternate: lysine 117 and lysine 121. Position 117 is an N6-methylated lysine; alternate (lysine 117). A Glycyl lysine isopeptide (Lys-Gly) (interchain with G-Cter in ubiquitin); alternate cross-link involves residue lysine 121.

This sequence belongs to the histone H2B family. In terms of assembly, the nucleosome is a histone octamer containing two molecules each of H2A, H2B, H3 and H4 assembled in one H3-H4 heterotetramer and two H2A-H2B heterodimers. The octamer wraps approximately 147 bp of DNA. Post-translationally, monoubiquitination at Lys-35 (H2BK34Ub) by the MSL1/MSL2 dimer is required for histone H3 'Lys-4' (H3K4me) and 'Lys-79' (H3K79me) methylation and transcription activation at specific gene loci, such as HOXA9 and MEIS1 loci. Similarly, monoubiquitination at Lys-121 (H2BK120Ub) by the RNF20/40 complex gives a specific tag for epigenetic transcriptional activation and is also prerequisite for histone H3 'Lys-4' and 'Lys-79' methylation. It also functions cooperatively with the FACT dimer to stimulate elongation by RNA polymerase II. H2BK120Ub also acts as a regulator of mRNA splicing: deubiquitination by USP49 is required for efficient cotranscriptional splicing of a large set of exons. In terms of processing, phosphorylated on Ser-15 (H2BS14ph) by STK4/MST1 during apoptosis; which facilitates apoptotic chromatin condensation. Also phosphorylated on Ser-15 in response to DNA double strand breaks (DSBs), and in correlation with somatic hypermutation and immunoglobulin class-switch recombination. Phosphorylation at Ser-37 (H2BS36ph) by AMPK in response to stress promotes transcription. GlcNAcylation at Ser-113 promotes monoubiquitination of Lys-121. It fluctuates in response to extracellular glucose, and associates with transcribed genes. Post-translationally, ADP-ribosylated by PARP1 or PARP2 on Ser-7 (H2BS6ADPr) in response to DNA damage. H2BS6ADPr promotes recruitment of CHD1L. Mono-ADP-ribosylated on Glu-3 (H2BE2ADPr) by PARP3 in response to single-strand breaks. Poly ADP-ribosylation on Glu-36 (H2BE35ADPr) by PARP1 regulates adipogenesis: it inhibits phosphorylation at Ser-37 (H2BS36ph), thereby blocking expression of pro-adipogenetic genes. In terms of processing, crotonylation (Kcr) is specifically present in male germ cells and marks testis-specific genes in post-meiotic cells, including X-linked genes that escape sex chromosome inactivation in haploid cells. Crotonylation marks active promoters and enhancers and confers resistance to transcriptional repressors. It is also associated with post-meiotically activated genes on autosomes. Hydroxybutyrylation of histones is induced by starvation. Post-translationally, lactylated in macrophages by EP300/P300 by using lactoyl-CoA directly derived from endogenous or exogenous lactate, leading to stimulates gene transcription.

The protein localises to the nucleus. The protein resides in the chromosome. In terms of biological role, core component of nucleosome. Nucleosomes wrap and compact DNA into chromatin, limiting DNA accessibility to the cellular machineries which require DNA as a template. Histones thereby play a central role in transcription regulation, DNA repair, DNA replication and chromosomal stability. DNA accessibility is regulated via a complex set of post-translational modifications of histones, also called histone code, and nucleosome remodeling. The polypeptide is Histone H2B type 1-K (Mus musculus (Mouse)).